Consider the following 134-residue polypeptide: Interleukin-5 (134 aa).

The first 21 residues, 1–21 (MRMLLNLSLLALGAAYVSAFA), serve as a signal peptide directing secretion. N-linked (GlcNAc...) asparagine glycans are attached at residues N76 and N90.

The protein belongs to the IL-5 family. As to quaternary structure, homodimer; disulfide-linked. Interacts with IL5RA. Interacts with CSF2RB.

The protein resides in the secreted. Its function is as follows. Homodimeric cytokine expressed predominantly by T-lymphocytes and NK cells that plays an important role in the survival, differentiation, and chemotaxis of eosinophils. Also acts on activated and resting B-cells to induce immunoglobulin production, growth, and differentiation. Mechanistically, exerts its biological effects through a receptor composed of IL5RA subunit and the cytokine receptor common subunit beta/CSF2RB. Binding to the receptor leads to activation of various kinases including LYN, SYK and JAK2 and thereby propagates signals through the RAS-MAPK and JAK-STAT5 pathways respectively. This chain is Interleukin-5 (IL5), found in Canis lupus familiaris (Dog).